The sequence spans 465 residues: Zinc finger and BTB domain-containing protein 32 (465 aa).

One can recognise a BTB domain in the interval 29–87 (CDTLITVGGLEFPAHSLVLAGASPRLGCRGRWALVEDISPSTFAQILTFVYGESIELQP). 2 disordered regions span residues 111–179 (RAQK…EMAG) and 285–310 (QNQLASSSPTPGSFPQGTESLSPWQI). Basic and acidic residues-rich tracts occupy residues 123–139 (PGLKRHQQSEDFMRGSE) and 147–176 (EKQKPEKDFRSNGREQEMSHKHKAPGERPE). C2H2-type zinc fingers lie at residues 350–372 (YSCSVCGKRFSLKHQMETHYRVH), 378–400 (FSCSLCPQRSRDFSAMTKHLRTH), and 405–427 (YRCPLCRAGCPSLASMQAHMRGH).

The protein belongs to the krueppel C2H2-type zinc-finger protein family. In terms of assembly, homodimer (via PTB domain). Interacts with the N-terminal of FANCC. Interacts with ZBTB16. Interacts with GATA3. Isoform 1 is testis-specific and is not expressed in lymphoid organs such as thymus or spleen. Isoform 2 is expressed in both B- and T-lymphoid cells.

The protein localises to the nucleus. In terms of biological role, DNA-binding protein that binds to the to a 5'-TGTACAGTGT-3' core sequence. May function as a transcriptional transactivator and transcriptional repressor. Probably exerts its repressor effect by preventing GATA3 from binding to DNA. May play a role in regulating the differentiation and activation of helper T-cells. This Mus musculus (Mouse) protein is Zinc finger and BTB domain-containing protein 32 (Zbtb32).